We begin with the raw amino-acid sequence, 99 residues long: Phosphoribosyl-ATP pyrophosphatase (99 aa).

It belongs to the PRA-PH family.

Its subcellular location is the cytoplasm. It catalyses the reaction 1-(5-phospho-beta-D-ribosyl)-ATP + H2O = 1-(5-phospho-beta-D-ribosyl)-5'-AMP + diphosphate + H(+). The protein operates within amino-acid biosynthesis; L-histidine biosynthesis; L-histidine from 5-phospho-alpha-D-ribose 1-diphosphate: step 2/9. The chain is Phosphoribosyl-ATP pyrophosphatase from Methanosphaerula palustris (strain ATCC BAA-1556 / DSM 19958 / E1-9c).